The following is a 659-amino-acid chain: Methionine--tRNA ligase (659 aa).

The 'HIGH' region signature appears at 13 to 23 (YYPSGNLHIGH). A 'KMSKS' region motif is present at residues 308–312 (KMSKS). Residue Lys311 coordinates ATP. The 101-residue stretch at 559–659 (DFDKVEIKAA…SAIPNGAVIK (101 aa)) folds into the tRNA-binding domain.

The protein belongs to the class-I aminoacyl-tRNA synthetase family. MetG type 2B subfamily. Homodimer.

Its subcellular location is the cytoplasm. It catalyses the reaction tRNA(Met) + L-methionine + ATP = L-methionyl-tRNA(Met) + AMP + diphosphate. Its function is as follows. Is required not only for elongation of protein synthesis but also for the initiation of all mRNA translation through initiator tRNA(fMet) aminoacylation. This Staphylococcus haemolyticus (strain JCSC1435) protein is Methionine--tRNA ligase.